Reading from the N-terminus, the 465-residue chain is Mothers against decapentaplegic homolog 1 (465 aa).

Met-1 is subject to N-acetylmethionine. In terms of domain architecture, MH1 spans 12–136; the sequence is PAVKRLLGWK…YKRVESPVLP (125 aa). Zn(2+) contacts are provided by Cys-64, Cys-109, Cys-121, and His-126. A disordered region spans residues 162 to 246; that stretch reads NEPHMPLNAT…DGSQPMDTNM (85 aa). The segment covering 179–212 has biased composition (low complexity); the sequence is PNSHPFPHSPNSSYPNSPGGSSSTYPHSPTSSDP. Residues 221–232 show a composition bias toward pro residues; sequence DTPPPAYLPPED. One can recognise an MH2 domain in the interval 271-465; sequence WCSIVYYELN…SPHNPISSVS (195 aa). The residue at position 322 (Thr-322) is a Phosphothreonine; by MINK1, TNIK and MAP4K4. Positions 418-428 are L3 loop; that stretch reads KGWGAEYHRQD. Ser-463 and Ser-465 each carry phosphoserine.

The protein belongs to the dwarfin/SMAD family. In terms of assembly, found in a complex with SMAD4 and YY1. Interacts with HGS, NANOG and ZCCHC12. Upon C-terminus phosphorylation: forms trimers with another SMAD1 and the co-SMAD SMAD4. Interacts with PEBP2-alpha subunit, CREB-binding protein (CBP), p300, SMURF1, SMURF2, USP15 and HOXC8. Associates with ZNF423 or ZNF521 in response to BMP2 leading to activate transcription of BMP target genes. Interacts with SKOR1. Interacts (via MH2 domain) with LEMD3. Binding to LEMD3 results in at least a partial reduction of receptor-mediated phosphorylation. Forms a ternary complex with PSMB4 and OAZ1 before PSMB4 is incorporated into the 20S proteasome. Interacts (via MH2 domain) with FAM83G (via MH2 domain); in a SMAD4-independent manner. Interacts with ZC3H3. Interacts with TMEM119. Interacts (via MH1 and MH2 domains) with ZNF8. Interacts with RANBP3L; the interaction increases when SMAD1 is not phosphorylated and mediates SMAD1 nuclear export. Interacts with EGR1; this interaction inhibits SMAD1 dephosphorylation. Interacts with SMAD6. Interacts with YAP1. Interacts with MTMR4; negatively regulates BMP signaling through SMAD1 dephosphorylation and retention in endosomes. In terms of processing, phosphorylation of the C-terminal SVS motif by BMP type 1 receptor kinase activates SMAD1 by promoting dissociation from the receptor and trimerization with SMAD4. Phosphorylation by ERK2 MAP kinase in response to EGF or HGF prevents SMAD1 nuclear accumulation and transcriptional activity in response to BMP. Dephosphorylation, probably by PPM1A, induces its export from the nucleus to the cytoplasm. Dephosphorylation is inhibited by association with EGR1. Phosphorylation by CDK8/9 creates binding sites for YAP1, and subsequent phosphorylation by GSK3 switches off YAP1 binding and adds binding sites for SMURF1. Ubiquitinated by SMAD-specific E3 ubiquitin ligase SMURF1, leading to its degradation. Monoubiquitinated, leading to prevent DNA-binding. Deubiquitination by USP15 alleviates inhibition and promotes activation of TGF-beta target genes. Dephosphorylation, probably by PPM1A, induces its export from the nucleus to the cytoplasm. Phospho-SMAD1 is ubiquitinated by CHIP leading to disruption of the SMAD1-SMAD4 complex. Ubiquitous.

It is found in the cytoplasm. The protein localises to the nucleus. Its function is as follows. Transcriptional modulator that plays a role in various cellular processes, including embryonic development, cell differentiation, and tissue homeostasis. Upon BMP ligand binding to their receptors at the cell surface, is phosphorylated by activated type I BMP receptors (BMPRIs) and associates with SMAD4 to form a heteromeric complex which translocates into the nucleus acting as transcription factor. In turn, the hetero-trimeric complex recognizes cis-regulatory elements containing Smad Binding Elements (SBEs) to modulate the outcome of the signaling network. SMAD1/OAZ1/PSMB4 complex mediates the degradation of the CREBBP/EP300 repressor SNIP1. Positively regulates BMP4-induced expression of odontogenic development regulator MSX1 following IPO7-mediated nuclear import. This is Mothers against decapentaplegic homolog 1 (Smad1) from Mus musculus (Mouse).